The following is a 96-amino-acid chain: Conotoxin Mr15.1 (96 aa).

The first 20 residues, 1 to 20, serve as a signal peptide directing secretion; that stretch reads MSTLKMMLLILLLLLPLATF. The propeptide occupies 21-57; sequence DSDGQAIPGGGIPSAVNSRVGRLLGGDEKSGRSLEKR.

Belongs to the conotoxin N superfamily. In terms of processing, contains 4 disulfide bonds. Expressed by the venom duct.

It localises to the secreted. This Conus marmoreus (Marble cone) protein is Conotoxin Mr15.1.